The following is a 216-amino-acid chain: Guanylate kinase (216 aa).

The 180-residue stretch at 12–191 (GLLFVISSPS…CVKQVKNILT (180 aa)) folds into the Guanylate kinase-like domain. 19–26 (SPSGAGKS) is an ATP binding site.

This sequence belongs to the guanylate kinase family.

Its subcellular location is the cytoplasm. The enzyme catalyses GMP + ATP = GDP + ADP. In terms of biological role, essential for recycling GMP and indirectly, cGMP. The sequence is that of Guanylate kinase from Zymomonas mobilis subsp. mobilis (strain ATCC 31821 / ZM4 / CP4).